The chain runs to 212 residues: Maleylacetoacetate isomerase (212 aa).

In terms of domain architecture, GST N-terminal spans 1 to 83 (MKLYTYYRST…YLEERYPQPA (83 aa)). Residues 88–211 (DPLRRARERG…HPANQPDTPA (124 aa)) enclose the GST C-terminal domain.

Belongs to the GST superfamily. Zeta family.

The catalysed reaction is 4-maleylacetoacetate = 4-fumarylacetoacetate. It functions in the pathway amino-acid degradation; L-phenylalanine degradation; acetoacetate and fumarate from L-phenylalanine: step 5/6. The polypeptide is Maleylacetoacetate isomerase (maiA) (Pseudomonas aeruginosa (strain ATCC 15692 / DSM 22644 / CIP 104116 / JCM 14847 / LMG 12228 / 1C / PRS 101 / PAO1)).